A 570-amino-acid polypeptide reads, in one-letter code: Protein mom-5 (570 aa).

A signal peptide spans Met1–Ala16. Over Asp17 to Arg230 the chain is Extracellular. The FZ domain maps to Ser32–Lys148. 5 disulfide bridges follow: Cys37–Cys98, Cys45–Cys91, Cys82–Cys119, Cys108–Cys145, and Cys112–Cys136. N-linked (GlcNAc...) asparagine glycosylation is present at Asn51. A glycan (N-linked (GlcNAc...) asparagine) is linked at Asn149. The helical transmembrane segment at Ile231–Phe251 threads the bilayer. The Cytoplasmic portion of the chain corresponds to Leu252 to Pro264. The helical transmembrane segment at Ile265–Gly285 threads the bilayer. Residues Glu286 to Tyr319 lie on the Extracellular side of the membrane. A helical transmembrane segment spans residues Phe320 to Ala340. Residues Asn341–Ser348 lie on the Cytoplasmic side of the membrane. Residues Ile349–Val369 form a helical membrane-spanning segment. The Extracellular segment spans residues Thr370–Ala395. Residues Leu396 to Val416 form a helical membrane-spanning segment. The Cytoplasmic portion of the chain corresponds to Cys417–Arg449. Residues Ile450–Tyr470 form a helical membrane-spanning segment. The Extracellular portion of the chain corresponds to Gln471–Glu515. The helical transmembrane segment at Ile516–Trp536 threads the bilayer. At Val537–Arg570 the chain is on the cytoplasmic side.

This sequence belongs to the G-protein coupled receptor Fz/Smo family.

It localises to the cell membrane. It is found in the early endosome. Its function is as follows. Receptor for Wnt proteins. Most frizzled receptors are coupled to the beta-catenin canonical signaling pathway, which leads to the activation of disheveled proteins, inhibition of gsk-3 kinase, nuclear accumulation of beta-catenin and activation of Wnt target genes. A second signaling pathway involving PKC and calcium fluxes has been seen for some family members, but it is not yet clear if it represents a distinct pathway or if it can be integrated in the canonical pathway, as pkc seems to be required for Wnt-mediated inactivation of gsk-3 kinase. Both pathways seem to involve interactions with G-proteins. Required in embryonic development for the correct positioning and orientation of the mitotic spindles and division planes in blastomere cells. During early embryonic cell divisions, directs the asymmetric positioning of transcription factors such as pop-1 and dsh-2 in daughter cells in order to determine cell fate specification. Acts redundantly with other Wnt receptors such as lin-17 to control vulval precursor cell specification and also the polarity of different cell types including distal tip cells, seam cells, AVG interneurons and P-cells and their descendants. Plays a role in the migration of cell types including distal tip cells and the QR neuroblast descendants, QR.p and QR.pa during larval development. Negatively regulates the unc-6/Netrin receptors unc-5 and unc-40 to control distal tip cell polarity and migration. Acts through ced-5/DOCK180 and ced-10/Rac to control both distal tip cell migration and the phagocytic clearance of apoptotic cell corpses. Furthermore, it is also required for the migration and axon guidance of the different neuronal cell types including CAN, ALM, HSN and the two mechanosensory neurons AVM and PVM. Mediates Wnt receptor cfz-2 in directing ALM migration, but may also act redundantly with the Wnt receptors cfz-2 and mig-1 to direct the migration of other neuronal cell types including CAN and HSN. Mediates Wnt ligand egl-20 in the control of the anterior-posterior axon guidance of AVM and PVM neurons. The chain is Protein mom-5 from Caenorhabditis elegans.